A 465-amino-acid chain; its full sequence is ATP synthase subunit beta (465 aa).

An ATP-binding site is contributed by 153–160; it reads GGAGVGKT.

This sequence belongs to the ATPase alpha/beta chains family. As to quaternary structure, F-type ATPases have 2 components, CF(1) - the catalytic core - and CF(0) - the membrane proton channel. CF(1) has five subunits: alpha(3), beta(3), gamma(1), delta(1), epsilon(1). CF(0) has three main subunits: a(1), b(2) and c(9-12). The alpha and beta chains form an alternating ring which encloses part of the gamma chain. CF(1) is attached to CF(0) by a central stalk formed by the gamma and epsilon chains, while a peripheral stalk is formed by the delta and b chains.

Its subcellular location is the cell membrane. The enzyme catalyses ATP + H2O + 4 H(+)(in) = ADP + phosphate + 5 H(+)(out). Its function is as follows. Produces ATP from ADP in the presence of a proton gradient across the membrane. The catalytic sites are hosted primarily by the beta subunits. The polypeptide is ATP synthase subunit beta (Clostridium perfringens (strain ATCC 13124 / DSM 756 / JCM 1290 / NCIMB 6125 / NCTC 8237 / Type A)).